The chain runs to 416 residues: Enterobactin exporter EntS (416 aa).

At 1–21 (MNKQSWLLNLSLLKTHPAFRA) the chain is on the cytoplasmic side. Residues 22–42 (VFLARFISIVSLGLLGVAVPV) form a helical membrane-spanning segment. Residues 43-55 (QIQMMTHSTWQVG) are Periplasmic-facing. Residues 56-76 (LSVTLTGGAMFVGLMVGGVLA) traverse the membrane as a helical segment. Topologically, residues 77–83 (DRYERKK) are cytoplasmic. A helical transmembrane segment spans residues 84-104 (VILLARGTCGIGFIGLCLNAL). At 105 to 109 (LPEPS) the chain is on the periplasmic side. Residues 110 to 130 (LLAIYLLGLWDGFFASLGVTA) form a helical membrane-spanning segment. At 131 to 156 (LLAATPALVGRENLMQAGALTMLTVR) the chain is on the cytoplasmic side. The helical transmembrane segment at 157–177 (LGSVISPMIGGLLLATGGVAW) threads the bilayer. Asn178 is a topological domain (periplasmic). A helical membrane pass occupies residues 179–199 (YGLAAAGTFITLLPLLSLPAL). Topologically, residues 200-218 (PPPPQPREHPLKSLLAGFR) are cytoplasmic. A helical transmembrane segment spans residues 219–239 (FLLASPLVGGIALLGGLLTMA). Topologically, residues 240-256 (SAVRVLYPALADNWQMS) are periplasmic. A helical transmembrane segment spans residues 257-277 (AAEIGFLYAAIPLGAAIGALT). The Cytoplasmic segment spans residues 278–287 (SGKLAHSARP). Residues 288–307 (GLLMLLSTLGSFLAIGLFGL) traverse the membrane as a helical segment. Residues 308–313 (MPMWIL) are Periplasmic-facing. Residues 314–336 (GVVCLALFGWLSAVSSLLQYTML) form a helical membrane-spanning segment. The Cytoplasmic portion of the chain corresponds to 337-356 (QTQTPEAMLGRINGLWTAQN). A helical transmembrane segment spans residues 357-377 (VTGDAIGAALLGGLGAMMTPV). Ala378 is a topological domain (periplasmic). The chain crosses the membrane as a helical span at residues 379–399 (SASASGFGLLIIGVLLLLVLV). Over 400-416 (ELRRFRQTPPQVTASDS) the chain is Cytoplasmic.

The protein belongs to the major facilitator superfamily. EntS (TC 2.A.1.38) family.

It localises to the cell inner membrane. Its function is as follows. Component of an export pathway for enterobactin. The protein is Enterobactin exporter EntS of Shigella boydii serotype 18 (strain CDC 3083-94 / BS512).